The sequence spans 127 residues: UPF0102 protein ERGA_CDS_00540 (127 aa).

It belongs to the UPF0102 family.

This is UPF0102 protein ERGA_CDS_00540 from Ehrlichia ruminantium (strain Gardel).